The primary structure comprises 296 residues: Protoheme IX farnesyltransferase (296 aa).

Residues M1–V9 lie on the Cytoplasmic side of the membrane. The chain crosses the membrane as a helical span at residues T10–L28. Over A29–P37 the chain is Periplasmic. Residues L38–F56 traverse the membrane as a helical segment. At N57–K78 the chain is on the cytoplasmic side. A helical transmembrane segment spans residues G79–G97. At F98–P107 the chain is on the periplasmic side. The helical transmembrane segment at L108–L126 threads the bilayer. Over Y127–P197 the chain is Cytoplasmic. The helical transmembrane segment at V198–F216 threads the bilayer. Topologically, residues A217 to Y228 are periplasmic. A helical membrane pass occupies residues A229–M247. Residues A248–S268 are Cytoplasmic-facing. Residues I269–N287 traverse the membrane as a helical segment. Topologically, residues S288–W296 are periplasmic.

This sequence belongs to the UbiA prenyltransferase family. Protoheme IX farnesyltransferase subfamily.

The protein resides in the cell inner membrane. The catalysed reaction is heme b + (2E,6E)-farnesyl diphosphate + H2O = Fe(II)-heme o + diphosphate. The protein operates within porphyrin-containing compound metabolism; heme O biosynthesis; heme O from protoheme: step 1/1. Functionally, converts heme B (protoheme IX) to heme O by substitution of the vinyl group on carbon 2 of heme B porphyrin ring with a hydroxyethyl farnesyl side group. In Salmonella arizonae (strain ATCC BAA-731 / CDC346-86 / RSK2980), this protein is Protoheme IX farnesyltransferase.